We begin with the raw amino-acid sequence, 89 residues long: Phytosulfokines 1 (89 aa).

Residues 1-22 (MVNPGRTARALCLLCLALLLLG) form the signal peptide. The propeptide occupies 23 to 79 (QDTHSRKLLLQEKHSHGVGNGTTTTQEPSRENGGSTGSNNNGQLQFDSAKWEEFHTD). Residues 33 to 68 (QEKHSHGVGNGTTTTQEPSRENGGSTGSNNNGQLQF) are disordered. Residue Asn-42 is glycosylated (N-linked (GlcNAc...) asparagine). 2 positions are modified to sulfotyrosine: Tyr-80 and Tyr-82. A propeptide spanning residues 85–89 (DVKNP) is cleaved from the precursor.

It belongs to the phytosulfokine family. Post-translationally, sulfation is important for activity and for the binding to a putative membrane receptor. In terms of processing, PSK-alpha is produced by endopeptidase digestion. PSK-beta is produced from PSK-alpha by exopeptidase digestion. Expressed throughout the seedling. More abundant in fragments containing shoot or root apexes where cells proliferate vigorously.

It is found in the secreted. Its function is as follows. Promotes plant cell differentiation, organogenesis and somatic embryogenesis as well as cell proliferation. The chain is Phytosulfokines 1 (PSK1) from Oryza sativa subsp. indica (Rice).